A 271-amino-acid chain; its full sequence is Phospholipid scramblase family member 5 (271 aa).

Residues 1 to 10 (MASKDAQNQR) show a composition bias toward polar residues. Residues 1–33 (MASKDAQNQRRGLPGFLPGAPDPDQSLPASSNP) are disordered. Positions 1 to 45 (MASKDAQNQRRGLPGFLPGAPDPDQSLPASSNPGNQAWQLSLPLP) are proline-rich domain (PRD).

Belongs to the phospholipid scramblase family.

The sequence is that of Phospholipid scramblase family member 5 (PLSCR5) from Homo sapiens (Human).